We begin with the raw amino-acid sequence, 687 residues long: Glycine--tRNA ligase beta subunit (687 aa).

It belongs to the class-II aminoacyl-tRNA synthetase family. In terms of assembly, tetramer of two alpha and two beta subunits.

The protein localises to the cytoplasm. It catalyses the reaction tRNA(Gly) + glycine + ATP = glycyl-tRNA(Gly) + AMP + diphosphate. This chain is Glycine--tRNA ligase beta subunit, found in Neisseria meningitidis serogroup C (strain 053442).